Reading from the N-terminus, the 228-residue chain is uncharacterized protein (228 aa).

The tract at residues 194 to 228 (SRRADEHPAPSTEPHAAAVAPEPDFMAEPIPALEE) is disordered.

This is an uncharacterized protein from Treponema pallidum (strain Nichols).